Reading from the N-terminus, the 130-residue chain is 3-aminoacrylate deaminase RutC (130 aa).

It belongs to the RutC family.

The catalysed reaction is (Z)-3-aminoacrylate + H2O + H(+) = 3-oxopropanoate + NH4(+). In terms of biological role, involved in pyrimidine catabolism. Catalyzes the deamination of 3-aminoacrylate to malonic semialdehyde, a reaction that can also occur spontaneously. RutC may facilitate the reaction and modulate the metabolic fitness, rather than catalyzing essential functions. This is 3-aminoacrylate deaminase RutC from Haliangium ochraceum (strain DSM 14365 / JCM 11303 / SMP-2).